The sequence spans 353 residues: Guanine nucleotide-binding protein subunit alpha (353 aa).

Residues 1–26 (MGCGMSVEEKEGKARNEEIENQLKRD) are disordered. Glycine 2 is lipidated: N-myristoyl glycine. Cysteine 3 carries S-palmitoyl cysteine lipidation. Positions 7–26 (VEEKEGKARNEEIENQLKRD) are enriched in basic and acidic residues. Positions 32–353 (NEIKMLLLGA…QENLRLCGLI (322 aa)) constitute a G-alpha domain. Positions 35 to 48 (KMLLLGAGESGKST) are G1 motif. GTP is bound by residues glutamate 43, serine 44, glycine 45, lysine 46, serine 47, threonine 48, aspartate 150, leucine 175, threonine 181, glycine 203, asparagine 269, lysine 270, aspartate 272, and alanine 325. Position 47 (serine 47) interacts with Mg(2+). The segment at 173–181 (DVLRSRVKT) is G2 motif. Position 181 (threonine 181) interacts with Mg(2+). The G3 motif stretch occupies residues 196–205 (YRMFDVGGQR). Positions 265-272 (ILFLNKID) are G4 motif. The tract at residues 323–328 (TCATDT) is G5 motif.

The protein belongs to the G-alpha family. G(q) subfamily. G proteins are composed of 3 units; alpha, beta and gamma. The alpha chain contains the guanine nucleotide binding site. The cofactor is Mg(2+).

Its function is as follows. Guanine nucleotide-binding proteins (G proteins) are involved as modulators or transducers in various transmembrane signaling systems. This is Guanine nucleotide-binding protein subunit alpha (SSG-1) from Sporothrix schenckii (strain ATCC 58251 / de Perez 2211183) (Rose-picker's disease fungus).